Here is a 165-residue protein sequence, read N- to C-terminus: Bark lectin isoform 1 (165 aa).

Asparagine 27 and asparagine 57 each carry an N-linked (GlcNAc...) asparagine glycan. Cystine bridges form between cysteine 33-cysteine 80 and cysteine 126-cysteine 133.

Belongs to the protease inhibitor I3 (leguminous Kunitz-type inhibitor) family. In terms of assembly, dimer.

Glucose and N-acetylglucosamine binding lectin. Has hemagglutinating activity against human and rabbit erythrocytes which does not require divalent cations. Inhibits factor Xa and, to a lesser extent, trypsin. Does not inhibit neutrophil elastase, human plasma kallikrein, papain, human plasmin, porcine pancreatic kallikrein and bovin chymotrypsin. Has insecticidal activity against the termite species N.corniger. Induces apoptosis in prostrate cancer cell lines DU145 and PC3. In Crateva tapia (Garlic-pear tree), this protein is Bark lectin isoform 1.